Consider the following 116-residue polypeptide: Ribosome-binding factor A (116 aa).

This sequence belongs to the RbfA family. Monomer. Binds 30S ribosomal subunits, but not 50S ribosomal subunits or 70S ribosomes.

The protein resides in the cytoplasm. Functionally, one of several proteins that assist in the late maturation steps of the functional core of the 30S ribosomal subunit. Associates with free 30S ribosomal subunits (but not with 30S subunits that are part of 70S ribosomes or polysomes). Required for efficient processing of 16S rRNA. May interact with the 5'-terminal helix region of 16S rRNA. The sequence is that of Ribosome-binding factor A from Streptococcus agalactiae.